The primary structure comprises 148 residues: Snaclec stejaggregin-A subunit beta-2 (148 aa).

An N-terminal signal peptide occupies residues 1–23 (MGQFIFVSFGLLVVLLSLSGAGA). The cysteines at positions 27 and 38 are disulfide-linked. The C-type lectin domain occupies 34 to 145 (YDLYCYKVFK…CSRTHYVVCK (112 aa)). N-linked (GlcNAc...) asparagine glycosylation is found at Asn-47 and Asn-78. Disulfide bonds link Cys-55–Cys-144 and Cys-121–Cys-136.

Belongs to the snaclec family. Heteromultimer; disulfide-linked. Expressed by the venom gland.

Its subcellular location is the secreted. Functionally, interferes with one step of hemostasis (modulation of platelet aggregation, or coagulation cascade, for example). The chain is Snaclec stejaggregin-A subunit beta-2 from Trimeresurus stejnegeri (Chinese green tree viper).